Consider the following 1049-residue polypeptide: MKDMDCIPGPKPLPVVGNLFDLDLDNALQSIIKMADEFGPLFQITVNRQKHIFATSQALVDELCDETRFHKAVIGGVEKLRMLAHDGLFTAHHGERGWGIAHRILMPAFGPLRIRDMFEDMSDVAHQLCFKWARQGSSTSINISEDFTRLTLDTIALCTMSFRLNSYYNSDTMHPFVQSMLYVLKEADLQSSLPEVANCVRVKAQRSMSKHIEAMRSIAGDIIKGRRDKPEPVNDLLNTLLNGRDPVTGEGMSDELIISNIITFLIAGHETTSGLLSFTFYYLLQHPQVLEQARNEVDEVVGVGPITVQHLAKLPYIDAIMKESLRLMPTAPSFTVTPKKPEVLGGKWMINPGQSVHVLLPVCLRDEAVFGPDAGEFRPNRMLEENFSKLPPNSWKPFGNGERGCIGRAFAWQEAQLVVASVLQTFDLVAEDPNYKLRVKETLTIKPDGFRVRATLRHGRSATALSQHNMSAGATSSPGSSAHPAGNKNAQDAAGGQSISFFYGSNSGTCKALAHRLASTMMTRGFTDQHLAPLDSAVDNLPKDQPTIIVTTTYEGQPTDDAKKFLAWLESGIVPSLHGVSYAVFGCGHQDWTKTFYRIPILIDDLMHKAGATRLTTRGEANAAVSDLFSDLEVWEETNLLPALREKFDASNSGEFESLDLQQLQISISKPTRVGMHRDLIEGKVTAIRTLTSPGVPEKRHVEFQITSDTTLRPGDHVNILPVNPPSTVLRALARFNLASDHIITFESSNALDLPQATPVSAAELFGSYLELSQPATRNNLKSLASTTPSDEDKQELLRFHDSYDSLIRDKRVSVLDLLEHFTSITLPIATFISMLPVLRVRTYSLSMAPSFKPLHCSLTFSVVNEPAWSGNGRYLGVGSNYLASLTPGSILYVSPRPAKEAFHLPADQSSKPIIMICAGSGLAPFRSFIQDRMAWLQQGKPLAKALLFFGCRGPQLDDLYHDELSEFESAGVVEVRRAYSKVPNHYPGKGCRYVQHRLFAETETIQDMWAHNATLYLCGSATLAKGVKATLENMLGTLSEERYITEIF.

A heme-binding site is contributed by Cys-405. The interval 462–492 is disordered; it reads ATALSQHNMSAGATSSPGSSAHPAGNKNAQD. Over residues 471–486 the composition is skewed to low complexity; it reads SAGATSSPGSSAHPAG. Residues 499–640 enclose the Flavodoxin-like domain; sequence ISFFYGSNSG…DLEVWEETNL (142 aa). FMN is bound by residues 505 to 509 and 584 to 616; these read SNSGT and VFGC…TRLT. In terms of domain architecture, FAD-binding FR-type spans 678 to 906; sequence RDLIEGKVTA…RPAKEAFHLP (229 aa).

The protein in the N-terminal section; belongs to the cytochrome P450 family. FAD serves as cofactor. The cofactor is FMN. It depends on heme as a cofactor.

It catalyses the reaction 2 oxidized [cytochrome P450] + NADPH = 2 reduced [cytochrome P450] + NADP(+) + H(+). It carries out the reaction an organic molecule + reduced [NADPH--hemoprotein reductase] + O2 = an alcohol + oxidized [NADPH--hemoprotein reductase] + H2O + H(+). The enzyme catalyses dodecanoate + reduced [NADPH--hemoprotein reductase] + O2 = 5-hydroxydodecanoate + oxidized [NADPH--hemoprotein reductase] + H2O + H(+). The catalysed reaction is tetradecanoate + reduced [NADPH--hemoprotein reductase] + O2 = 7-hydroxytetradecanoate + oxidized [NADPH--hemoprotein reductase] + H2O + H(+). It catalyses the reaction dodecan-1-ol + reduced [NADPH--hemoprotein reductase] + O2 = 1,5-dodecanediol + oxidized [NADPH--hemoprotein reductase] + H2O + H(+). It carries out the reaction dodecan-1-ol + reduced [NADPH--hemoprotein reductase] + O2 = 1,4-dodecanediol + oxidized [NADPH--hemoprotein reductase] + H2O + H(+). The enzyme catalyses dodecan-1-ol + reduced [NADPH--hemoprotein reductase] + O2 = 1,6-dodecanediol + oxidized [NADPH--hemoprotein reductase] + H2O + H(+). Functionally, self-sufficient cytochrome P450 monooxygenase that catalyzes the regioselective in-chain hydroxylation of alkanes, fatty alcohols, and fatty acids at the omega-7 position. Performs hydroxylation of C10-C16 n-alkanes and C12 and C14 fatty alcohols; and thereby enables the one step biocatalytic synthesis of rare alcohols such as 5-dodecanol and 7-tetradecanol. Converts 1-dodecanol into 1,5-dodecanediol as major product with very little sub-terminally hydroxylated products with the 1,4-dodecanediol and 1,6-dodecanediol more abundant. Converts dodecanoic acid to 5-hydroxydodecanoic acid which can be further converted into delta-dodecalactone by lactonization of the 5-hydroxy acid at low pH. Also gives sub-terminal hydroxylation of dodecanoic acid with 9-hydroxydodecanoic acid being the second most abundant product. The sequence is that of Self-sufficient cytochrome P450 monooxygenase CYP505E4 from Penicillium freii.